Here is a 163-residue protein sequence, read N- to C-terminus: Lectin-like protein EP153R (163 aa).

Residues 1–26 (MFSNKKYIGLINKKEGLKKKIDDYSI) are Cytoplasmic-facing. Residues 27–47 (LIIGILIGTNILSLIINIIGE) traverse the membrane as a helical segment. The Extracellular portion of the chain corresponds to 48-163 (INKPICYQNN…YTDLLFICSK (116 aa)). An intrachain disulfide couples cysteine 63 to cysteine 74. Residues 63-162 (CPKDWVGYNN…HYTDLLFICS (100 aa)) form a lectin-like region. Residues asparagine 84, asparagine 96, asparagine 97, asparagine 103, asparagine 109, asparagine 115, asparagine 129, and asparagine 135 are each glycosylated (N-linked (GlcNAc...) asparagine; by host). Cysteine 92 and cysteine 161 are oxidised to a cystine.

Belongs to the asfivirus lectin-like protein family. As to quaternary structure, homodimer.

The protein localises to the host endoplasmic reticulum membrane. Functionally, down-regulates MHC-I expression by impairing the appropriate configuration or presentation into the plasma membrane of the latter. Participates in viral hemadsorption, which may help viral spread. Reduces the transactivating activity of host TP53, thus inhibiting apoptosis. Non-essential for virus growth in swine macrophage cell cultures. The polypeptide is Lectin-like protein EP153R (African swine fever virus (isolate Warthog/Namibia/Wart80/1980) (ASFV)).